Here is a 115-residue protein sequence, read N- to C-terminus: Large ribosomal subunit protein uL22 (115 aa).

The protein belongs to the universal ribosomal protein uL22 family. In terms of assembly, part of the 50S ribosomal subunit.

Functionally, this protein binds specifically to 23S rRNA; its binding is stimulated by other ribosomal proteins, e.g. L4, L17, and L20. It is important during the early stages of 50S assembly. It makes multiple contacts with different domains of the 23S rRNA in the assembled 50S subunit and ribosome. In terms of biological role, the globular domain of the protein is located near the polypeptide exit tunnel on the outside of the subunit, while an extended beta-hairpin is found that lines the wall of the exit tunnel in the center of the 70S ribosome. The polypeptide is Large ribosomal subunit protein uL22 (Streptomyces avermitilis (strain ATCC 31267 / DSM 46492 / JCM 5070 / NBRC 14893 / NCIMB 12804 / NRRL 8165 / MA-4680)).